Reading from the N-terminus, the 392-residue chain is Phosphopentomutase (392 aa).

The Mn(2+) site is built by Asp10, Asp282, His287, Asp323, His324, and His335.

Belongs to the phosphopentomutase family. It depends on Mn(2+) as a cofactor.

The protein resides in the cytoplasm. The enzyme catalyses 2-deoxy-alpha-D-ribose 1-phosphate = 2-deoxy-D-ribose 5-phosphate. The catalysed reaction is alpha-D-ribose 1-phosphate = D-ribose 5-phosphate. The protein operates within carbohydrate degradation; 2-deoxy-D-ribose 1-phosphate degradation; D-glyceraldehyde 3-phosphate and acetaldehyde from 2-deoxy-alpha-D-ribose 1-phosphate: step 1/2. In terms of biological role, isomerase that catalyzes the conversion of deoxy-ribose 1-phosphate (dRib-1-P) and ribose 1-phosphate (Rib-1-P) to deoxy-ribose 5-phosphate (dRib-5-P) and ribose 5-phosphate (Rib-5-P), respectively. This Dictyoglomus thermophilum (strain ATCC 35947 / DSM 3960 / H-6-12) protein is Phosphopentomutase.